The following is a 429-amino-acid chain: Enolase (429 aa).

Gln-167 contacts (2R)-2-phosphoglycerate. Glu-209 (proton donor) is an active-site residue. Mg(2+)-binding residues include Asp-246, Glu-289, and Asp-316. (2R)-2-phosphoglycerate is bound by residues Lys-341, Arg-370, Ser-371, and Lys-392. Residue Lys-341 is the Proton acceptor of the active site.

It belongs to the enolase family. In terms of assembly, component of the RNA degradosome, a multiprotein complex involved in RNA processing and mRNA degradation. Mg(2+) is required as a cofactor.

It is found in the cytoplasm. It localises to the secreted. Its subcellular location is the cell surface. The catalysed reaction is (2R)-2-phosphoglycerate = phosphoenolpyruvate + H2O. Its pathway is carbohydrate degradation; glycolysis; pyruvate from D-glyceraldehyde 3-phosphate: step 4/5. Catalyzes the reversible conversion of 2-phosphoglycerate (2-PG) into phosphoenolpyruvate (PEP). It is essential for the degradation of carbohydrates via glycolysis. This chain is Enolase, found in Pseudomonas entomophila (strain L48).